Reading from the N-terminus, the 293-residue chain is Exosome complex component RRP4 (293 aa).

The tract at residues 1 to 20 (MALEMRLPKARKPLSESLGR) is disordered. Residues 79–159 (EVGDIVVGRI…SDGAVSLHTR (81 aa)) form the S1 motif domain. The residue at position 124 (S124) is a Phosphoserine.

This sequence belongs to the RRP4 family. As to quaternary structure, component of the RNA exosome core complex (Exo-9), composed of EXOSC1, EXOSC2, EXOSC3, EXOSC4, EXOSC5, EXOSC6, EXOSC7, EXOSC8 and EXOSC9; within the complex interacts with EXOSC4 and EXOSC7. The catalytically inactive RNA exosome core complex (Exo-9) associates with the catalytic subunit EXOSC10/RRP6. Exo-9 may associate with DIS3 to form the nucleolar exosome complex, or DIS3L to form the cytoplasmic exosome complex. Exo-9 is formed by a hexameric base ring consisting of the heterodimers EXOSC4-EXOSC9, EXOSC5-EXOSC8 and EXOSC6-EXOSC7, and a cap ring consisting of EXOSC1, EXOSC2 and EXOSC3. The RNA exosome complex associates with cofactors C1D/RRP47, MPHOSPH6/MPP6 and MTREX/MTR4. Interacts with GTPBP1. Interacts with ZFP36L1 (via N-terminus).

The protein resides in the cytoplasm. It is found in the nucleus. The protein localises to the nucleolus. Non-catalytic component of the RNA exosome complex which has 3'-&gt;5' exoribonuclease activity and participates in a multitude of cellular RNA processing and degradation events. In the nucleus, the RNA exosome complex is involved in proper maturation of stable RNA species such as rRNA, snRNA and snoRNA, in the elimination of RNA processing by-products and non-coding 'pervasive' transcripts, such as antisense RNA species and promoter-upstream transcripts (PROMPTs), and of mRNAs with processing defects, thereby limiting or excluding their export to the cytoplasm. The RNA exosome may be involved in Ig class switch recombination (CSR) and/or Ig variable region somatic hypermutation (SHM) by targeting AICDA deamination activity to transcribed dsDNA substrates. In the cytoplasm, the RNA exosome complex is involved in general mRNA turnover and specifically degrades inherently unstable mRNAs containing AU-rich elements (AREs) within their 3' untranslated regions, and in RNA surveillance pathways, preventing translation of aberrant mRNAs. It seems to be involved in degradation of histone mRNA. The catalytic inactive RNA exosome core complex of 9 subunits (Exo-9) is proposed to play a pivotal role in the binding and presentation of RNA for ribonucleolysis, and to serve as a scaffold for the association with catalytic subunits and accessory proteins or complexes. EXOSC2 as peripheral part of the Exo-9 complex stabilizes the hexameric ring of RNase PH-domain subunits through contacts with EXOSC4 and EXOSC7. In Mus musculus (Mouse), this protein is Exosome complex component RRP4 (Exosc2).